The chain runs to 100 residues: Small ribosomal subunit protein uS14 (100 aa).

It belongs to the universal ribosomal protein uS14 family. Part of the 30S ribosomal subunit. Contacts proteins S3 and S10.

Functionally, binds 16S rRNA, required for the assembly of 30S particles and may also be responsible for determining the conformation of the 16S rRNA at the A site. This is Small ribosomal subunit protein uS14 from Rippkaea orientalis (strain PCC 8801 / RF-1) (Cyanothece sp. (strain PCC 8801)).